The sequence spans 340 residues: DNA-directed RNA polymerase subunit alpha (340 aa).

Residues 1-236 form an alpha N-terminal domain (alpha-NTD) region; the sequence is MSVIQKNWQE…DQLQLFINFE (236 aa). Residues 252 to 340 are alpha C-terminal domain (alpha-CTD); sequence FNKNLLRKVD…DLAKKLEEPY (89 aa).

It belongs to the RNA polymerase alpha chain family. Homodimer. The RNAP catalytic core consists of 2 alpha, 1 beta, 1 beta' and 1 omega subunit. When a sigma factor is associated with the core the holoenzyme is formed, which can initiate transcription.

The enzyme catalyses RNA(n) + a ribonucleoside 5'-triphosphate = RNA(n+1) + diphosphate. In terms of biological role, DNA-dependent RNA polymerase catalyzes the transcription of DNA into RNA using the four ribonucleoside triphosphates as substrates. This Rhodospirillum rubrum (strain ATCC 11170 / ATH 1.1.1 / DSM 467 / LMG 4362 / NCIMB 8255 / S1) protein is DNA-directed RNA polymerase subunit alpha.